A 297-amino-acid polypeptide reads, in one-letter code: Homoserine kinase (297 aa).

Residue Pro-82–Ser-92 coordinates ATP.

The protein belongs to the GHMP kinase family. Homoserine kinase subfamily.

It is found in the cytoplasm. The catalysed reaction is L-homoserine + ATP = O-phospho-L-homoserine + ADP + H(+). It functions in the pathway amino-acid biosynthesis; L-threonine biosynthesis; L-threonine from L-aspartate: step 4/5. Functionally, catalyzes the ATP-dependent phosphorylation of L-homoserine to L-homoserine phosphate. This Bacillus cereus (strain G9842) protein is Homoserine kinase.